Here is a 480-residue protein sequence, read N- to C-terminus: Ribosomal RNA small subunit methyltransferase F (480 aa).

Residues 125 to 131, Glu-149, Asp-176, and Asp-194 each bind S-adenosyl-L-methionine; that span reads AAAPGSK. The active-site Nucleophile is the Cys-247.

This sequence belongs to the class I-like SAM-binding methyltransferase superfamily. RsmB/NOP family.

Its subcellular location is the cytoplasm. It carries out the reaction cytidine(1407) in 16S rRNA + S-adenosyl-L-methionine = 5-methylcytidine(1407) in 16S rRNA + S-adenosyl-L-homocysteine + H(+). Its function is as follows. Specifically methylates the cytosine at position 1407 (m5C1407) of 16S rRNA. This chain is Ribosomal RNA small subunit methyltransferase F, found in Enterobacter sp. (strain 638).